Reading from the N-terminus, the 263-residue chain is Undecaprenyl-diphosphatase (263 aa).

7 helical membrane-spanning segments follow: residues 38-58 (RSDF…CLAL), 75-95 (RDYV…GLIV), 108-128 (PVAW…HFAG), 135-155 (VVTW…GVFP), 181-201 (FVFM…LLEM), 217-237 (VAFI…LGYI), and 242-262 (FTVF…WLPA).

This sequence belongs to the UppP family.

Its subcellular location is the cell inner membrane. The enzyme catalyses di-trans,octa-cis-undecaprenyl diphosphate + H2O = di-trans,octa-cis-undecaprenyl phosphate + phosphate + H(+). In terms of biological role, catalyzes the dephosphorylation of undecaprenyl diphosphate (UPP). Confers resistance to bacitracin. In Xanthomonas campestris pv. campestris (strain 8004), this protein is Undecaprenyl-diphosphatase.